Reading from the N-terminus, the 382-residue chain is Apolipoprotein A-IV (382 aa).

A signal peptide spans M1–A20. 13 consecutive repeat copies span residues D33–L54, A60–V81, P82–R103, P115–G136, P137–T158, S159–T180, P181–T202, P203–A224, P225–K246, K247–A268, P269–Q286, E287–G308, and P309–G330. The tract at residues D33–G330 is 13 X 22 AA approximate tandem repeats. A disordered region spans residues E362–S382.

This sequence belongs to the apolipoprotein A1/A4/E family. Homodimer.

The protein resides in the secreted. May have a role in chylomicrons and VLDL secretion and catabolism. Required for efficient activation of lipoprotein lipase by ApoC-II; potent activator of LCAT. Apoa-IV is a major component of HDL and chylomicrons. The polypeptide is Apolipoprotein A-IV (APOA4) (Acinonyx jubatus (Cheetah)).